The chain runs to 128 residues: Virion-associated protein (128 aa).

Coiled coils occupy residues 1–30 (MNLA…ILAK) and 37–58 (ESSN…EMKE). The interval 98–128 (FDVGNEGMGSSTNPNALKWPPTEKPQPWPPR) is disordered. Pro residues predominate over residues 119 to 128 (TEKPQPWPPR). The interval 122 to 128 (PQPWPPR) is capsid binding.

It belongs to the caulimovirus ORF III family. In terms of assembly, homotetramer, through coiled-coil domain. Homotrimer when interacts with icosehadral capsid. Interacts with capsid protein, and with Movement protein.

It localises to the virion. The protein resides in the host cell junction. The protein localises to the host plasmodesma. Its function is as follows. Plays a role in virus cell-to-cell and plant-to-plant transmission. Interacts with virion icosahedral capsid and movement protein, thereby facilitating virion cell-to-cell transmission through plasmodesmata opened by viral movement protein. Also interacts with aphid transmission factor, attaching the virion to aphid stylet when the animal feeds on an virus infected plant. Aphid saliva may later detach the virion, inducing release of infectious particles when the animal feeds on a new plant. The polypeptide is Virion-associated protein (Carnation etched ring virus (CERV)).